We begin with the raw amino-acid sequence, 504 residues long: Glutamate--tRNA ligase (504 aa).

Positions 25–35 (PSPTGNPHVGL) match the 'HIGH' region motif. Positions 122, 124, 149, and 151 each coordinate Zn(2+). Residues 270 to 274 (KLSKR) carry the 'KMSKS' region motif. Lysine 273 provides a ligand contact to ATP.

Belongs to the class-I aminoacyl-tRNA synthetase family. Glutamate--tRNA ligase type 1 subfamily. As to quaternary structure, monomer. The cofactor is Zn(2+).

The protein resides in the cytoplasm. It catalyses the reaction tRNA(Glu) + L-glutamate + ATP = L-glutamyl-tRNA(Glu) + AMP + diphosphate. Catalyzes the attachment of glutamate to tRNA(Glu) in a two-step reaction: glutamate is first activated by ATP to form Glu-AMP and then transferred to the acceptor end of tRNA(Glu). This is Glutamate--tRNA ligase from Streptomyces griseus subsp. griseus (strain JCM 4626 / CBS 651.72 / NBRC 13350 / KCC S-0626 / ISP 5235).